The primary structure comprises 442 residues: Phosphoglucosamine mutase (442 aa).

The active-site Phosphoserine intermediate is the S103. 4 residues coordinate Mg(2+): S103, D241, D243, and D245. Position 103 is a phosphoserine (S103).

The protein belongs to the phosphohexose mutase family. Mg(2+) is required as a cofactor. In terms of processing, activated by phosphorylation.

It catalyses the reaction alpha-D-glucosamine 1-phosphate = D-glucosamine 6-phosphate. Functionally, catalyzes the conversion of glucosamine-6-phosphate to glucosamine-1-phosphate. This is Phosphoglucosamine mutase from Deinococcus deserti (strain DSM 17065 / CIP 109153 / LMG 22923 / VCD115).